The chain runs to 65 residues: SCOCO-like protein 1 (65 aa).

A coiled-coil region spans residues 8 to 44 (RSLMEQKAMELQQQLQALLDEIDQNKQESENISRESE).

Belongs to the SLO1 family.

The protein is SCOCO-like protein 1 of Schizosaccharomyces pombe (strain 972 / ATCC 24843) (Fission yeast).